A 350-amino-acid polypeptide reads, in one-letter code: ATPase GET3 (350 aa).

26-33 is an ATP binding site; sequence KGGVGKTT. Asp57 is a catalytic residue. Residues Glu243 and Asn270 each coordinate ATP. Zn(2+) contacts are provided by Cys282 and Cys285.

This sequence belongs to the arsA ATPase family. In terms of assembly, homodimer. Component of the Golgi to ER traffic (GET) complex, which is composed of GET1, GET2 and GET3. Within the complex, GET1 and GET2 form a heterotetramer which is stabilized by phosphatidylinositol binding and which binds to the GET3 homodimer. Interacts with the chloride channel protein GEF1.

It localises to the cytoplasm. The protein localises to the endoplasmic reticulum. Its subcellular location is the golgi apparatus. In terms of biological role, ATPase required for the post-translational delivery of tail-anchored (TA) proteins to the endoplasmic reticulum. Recognizes and selectively binds the transmembrane domain of TA proteins in the cytosol. This complex then targets to the endoplasmic reticulum by membrane-bound receptors GET1 and GET2, where the tail-anchored protein is released for insertion. This process is regulated by ATP binding and hydrolysis. ATP binding drives the homodimer towards the closed dimer state, facilitating recognition of newly synthesized TA membrane proteins. ATP hydrolysis is required for insertion. Subsequently, the homodimer reverts towards the open dimer state, lowering its affinity for the GET1-GET2 receptor, and returning it to the cytosol to initiate a new round of targeting. Cooperates with the HDEL receptor ERD2 to mediate the ATP-dependent retrieval of resident ER proteins that contain a C-terminal H-D-E-L retention signal from the Golgi to the ER. Involved in low-level resistance to the oxyanions arsenite and arsenate, and in heat tolerance. The protein is ATPase GET3 of Candida dubliniensis (strain CD36 / ATCC MYA-646 / CBS 7987 / NCPF 3949 / NRRL Y-17841) (Yeast).